The primary structure comprises 331 residues: Large ribosomal subunit protein uL3 (331 aa).

Belongs to the universal ribosomal protein uL3 family. As to quaternary structure, part of the 50S ribosomal subunit. Forms a cluster with proteins L14 and L24e.

In terms of biological role, one of the primary rRNA binding proteins, it binds directly near the 3'-end of the 23S rRNA, where it nucleates assembly of the 50S subunit. This is Large ribosomal subunit protein uL3 from Thermoplasma volcanium (strain ATCC 51530 / DSM 4299 / JCM 9571 / NBRC 15438 / GSS1).